A 60-amino-acid chain; its full sequence is ATP synthase subunit J, mitochondrial (60 aa).

The chain crosses the membrane as a helical span at residues 13–32; the sequence is ILKPMLPFFLGGAIVFYGTV.

It belongs to the ATPase j subunit family. F-type ATPases have 2 components, CF(1) - the catalytic core - and CF(0) - the membrane proton channel. In yeast, the dimeric form of ATP synthase consists of 17 polypeptides: alpha, beta, gamma, delta, epsilon, 4 (B), 5 (OSCP), 6 (A), 8, 9 (C), d, E (Tim11), f, g, h, i/j and k.

It is found in the mitochondrion membrane. Mitochondrial membrane ATP synthase (F(1)F(0) ATP synthase or Complex V) produces ATP from ADP in the presence of a proton gradient across the membrane which is generated by electron transport complexes of the respiratory chain. F-type ATPases consist of two structural domains, F(1) - containing the extramembraneous catalytic core and F(0) - containing the membrane proton channel, linked together by a central stalk and a peripheral stalk. During catalysis, ATP synthesis in the catalytic domain of F(1) is coupled via a rotary mechanism of the central stalk subunits to proton translocation. Part of the complex F(0) domain. Minor subunit located with subunit a in the membrane. In Schizosaccharomyces pombe (strain 972 / ATCC 24843) (Fission yeast), this protein is ATP synthase subunit J, mitochondrial (atp18).